Consider the following 168-residue polypeptide: Chorismate pyruvate-lyase (168 aa).

Met36, Arg78, Leu116, and Glu157 together coordinate substrate.

Belongs to the UbiC family. As to quaternary structure, monomer.

The protein localises to the cytoplasm. It catalyses the reaction chorismate = 4-hydroxybenzoate + pyruvate. It participates in cofactor biosynthesis; ubiquinone biosynthesis. Functionally, removes the pyruvyl group from chorismate, with concomitant aromatization of the ring, to provide 4-hydroxybenzoate (4HB) for the ubiquinone pathway. The polypeptide is Chorismate pyruvate-lyase (Yersinia enterocolitica serotype O:8 / biotype 1B (strain NCTC 13174 / 8081)).